We begin with the raw amino-acid sequence, 252 residues long: Flagellar L-ring protein (252 aa).

An N-terminal signal peptide occupies residues 1-25 (MSKSVPLQRIVLVAALMATGGLAGG). C26 carries the N-palmitoyl cysteine lipid modification. A lipid anchor (S-diacylglycerol cysteine) is attached at C26.

The protein belongs to the FlgH family. As to quaternary structure, the basal body constitutes a major portion of the flagellar organelle and consists of four rings (L,P,S, and M) mounted on a central rod.

It localises to the cell outer membrane. The protein localises to the bacterial flagellum basal body. Its function is as follows. Assembles around the rod to form the L-ring and probably protects the motor/basal body from shearing forces during rotation. In Rhodopseudomonas palustris (strain ATCC BAA-98 / CGA009), this protein is Flagellar L-ring protein.